Consider the following 227-residue polypeptide: Ribonuclease 3 (227 aa).

Residues 6–128 enclose the RNase III domain; sequence ASDYQQRIGY…VIAAIYLDAD (123 aa). A Mg(2+)-binding site is contributed by Glu-41. Asp-45 is an active-site residue. Mg(2+)-binding residues include Asp-114 and Glu-117. Residue Glu-117 is part of the active site. One can recognise a DRBM domain in the interval 155–225; the sequence is DPKTRLQEWL…ASHAIDQLDS (71 aa). Over residues 203-212 the composition is skewed to basic and acidic residues; that stretch reads GEGSSRRLAE. Positions 203 to 227 are disordered; it reads GEGSSRRLAEQDAASHAIDQLDSNK.

The protein belongs to the ribonuclease III family. Homodimer. The cofactor is Mg(2+).

It localises to the cytoplasm. It catalyses the reaction Endonucleolytic cleavage to 5'-phosphomonoester.. Functionally, digests double-stranded RNA. Involved in the processing of primary rRNA transcript to yield the immediate precursors to the large and small rRNAs (23S and 16S). Processes some mRNAs, and tRNAs when they are encoded in the rRNA operon. Processes pre-crRNA and tracrRNA of type II CRISPR loci if present in the organism. The sequence is that of Ribonuclease 3 from Xylella fastidiosa (strain 9a5c).